The following is a 207-amino-acid chain: dTTP/UTP pyrophosphatase (207 aa).

Asp-87 serves as the catalytic Proton acceptor.

It belongs to the Maf family. YhdE subfamily. It depends on a divalent metal cation as a cofactor.

The protein resides in the cytoplasm. The catalysed reaction is dTTP + H2O = dTMP + diphosphate + H(+). It catalyses the reaction UTP + H2O = UMP + diphosphate + H(+). In terms of biological role, nucleoside triphosphate pyrophosphatase that hydrolyzes dTTP and UTP. May have a dual role in cell division arrest and in preventing the incorporation of modified nucleotides into cellular nucleic acids. This chain is dTTP/UTP pyrophosphatase, found in Bordetella pertussis (strain Tohama I / ATCC BAA-589 / NCTC 13251).